The following is a 279-amino-acid chain: NADPH-dependent 7-cyano-7-deazaguanine reductase (279 aa).

86-88 (IES) is a substrate binding site. 88–89 (SK) is a binding site for NADPH. Catalysis depends on cysteine 187, which acts as the Thioimide intermediate. The Proton donor role is filled by aspartate 194. 226–227 (HE) provides a ligand contact to substrate. 255 to 256 (RG) is an NADPH binding site.

It belongs to the GTP cyclohydrolase I family. QueF type 2 subfamily. As to quaternary structure, homodimer.

It is found in the cytoplasm. The enzyme catalyses 7-aminomethyl-7-carbaguanine + 2 NADP(+) = 7-cyano-7-deazaguanine + 2 NADPH + 3 H(+). It functions in the pathway tRNA modification; tRNA-queuosine biosynthesis. Functionally, catalyzes the NADPH-dependent reduction of 7-cyano-7-deazaguanine (preQ0) to 7-aminomethyl-7-deazaguanine (preQ1). The chain is NADPH-dependent 7-cyano-7-deazaguanine reductase from Glaesserella parasuis serovar 5 (strain SH0165) (Haemophilus parasuis).